The following is a 1489-amino-acid chain: Ras GTPase-activating-like protein rng2 (1489 aa).

Residues 41–147 (LCRVDEAKKW…YCIHALSYFL (107 aa)) enclose the Calponin-homology (CH) domain. IQ domains lie at 359–388 (QSSS…AYDE), 389–418 (LVNW…QEEA), 418–449 (ATKS…DLFT), 535–564 (ELDN…KLKA), 565–594 (STSS…SFQK), and 655–684 (FIPE…NFHK). A coiled-coil region spans residues 734 to 770 (EEEVLLEKMRKEIVQQVRDNEEIEVHINELDVKIALL). The Ras-GAP domain occupies 870–1110 (VLLLRFISQV…QDTMLMLERL (241 aa)). Residues 1330–1364 (QSLLNLREKRAFLDSQLKSYNEYIEQAMETLQSKK) adopt a coiled-coil conformation.

In terms of assembly, interacts with calmodulin cam1.

The protein localises to the cytoplasm. It is found in the cytoskeleton. The protein resides in the nucleus envelope. It localises to the microtubule organizing center. Its subcellular location is the spindle pole body. In terms of biological role, component of the contractile F-actin ring; required for its construction following assembly of F-actin at the division site. The polypeptide is Ras GTPase-activating-like protein rng2 (Schizosaccharomyces pombe (strain 972 / ATCC 24843) (Fission yeast)).